The following is an 833-amino-acid chain: Phosphatidylinositol-3-phosphatase myotubularin-2 (833 aa).

Residues 42-109 (GSYSNLDCLL…VAIEKFNKLA (68 aa)) enclose the GRAM domain. In terms of domain architecture, Myotubularin phosphatase spans 181–647 (TNPKERLLNE…LAPTLWPQFH (467 aa)). Substrate-binding positions include 329-332 (NGAK), 354-355 (NI), 440-446 (CSDGWDR), and arginine 486. Residue cysteine 440 is the Phosphocysteine intermediate of the active site. The disordered stretch occupies residues 503–530 (QSSSARSFPSSPVRQSPGSAAAQSSSSS). Residues 504–530 (SSSARSFPSSPVRQSPGSAAAQSSSSS) are compositionally biased toward low complexity. The stretch at 660-717 (ETEDQCRAMTVKYSEMKKEKEEAERKVDELSSAMESLNEELLNERDISRAARESAKRA) forms a coiled coil. Residues 753-772 (KCSHSIPQKQSEDNTTDVSE) form a disordered region.

The protein belongs to the protein-tyrosine phosphatase family. Non-receptor class myotubularin subfamily. As to expression, mostly expressed in flowers and roots, and, to a lower extent, in siliques and leaves.

It is found in the cytoplasm. The catalysed reaction is a 1,2-diacyl-sn-glycero-3-phospho-(1D-myo-inositol-3-phosphate) + H2O = a 1,2-diacyl-sn-glycero-3-phospho-(1D-myo-inositol) + phosphate. It carries out the reaction a 1,2-diacyl-sn-glycero-3-phospho-(1D-myo-inositol-3,5-bisphosphate) + H2O = a 1,2-diacyl-sn-glycero-3-phospho-(1D-myo-inositol-5-phosphate) + phosphate. Phosphatase with phosphoinositide 3'-phosphatase activity that can use phosphatidylinositol-3-phosphate (PtdIns3P) and phosphatidylinositol-3,5-diphosphate (PtdIns3,5P(2)) as substrates and produces phosphatidylinositol-5-phosphate (PtdIns5P); participates in pathway(s) that transfer gene regulatory signals to the nucleus. The chain is Phosphatidylinositol-3-phosphatase myotubularin-2 (MTM2) from Arabidopsis thaliana (Mouse-ear cress).